The following is a 258-amino-acid chain: Imidazole glycerol phosphate synthase subunit HisF (258 aa).

Residues Asp-11 and Asp-130 contribute to the active site.

The protein belongs to the HisA/HisF family. In terms of assembly, heterodimer of HisH and HisF.

The protein localises to the cytoplasm. The catalysed reaction is 5-[(5-phospho-1-deoxy-D-ribulos-1-ylimino)methylamino]-1-(5-phospho-beta-D-ribosyl)imidazole-4-carboxamide + L-glutamine = D-erythro-1-(imidazol-4-yl)glycerol 3-phosphate + 5-amino-1-(5-phospho-beta-D-ribosyl)imidazole-4-carboxamide + L-glutamate + H(+). It functions in the pathway amino-acid biosynthesis; L-histidine biosynthesis; L-histidine from 5-phospho-alpha-D-ribose 1-diphosphate: step 5/9. In terms of biological role, IGPS catalyzes the conversion of PRFAR and glutamine to IGP, AICAR and glutamate. The HisF subunit catalyzes the cyclization activity that produces IGP and AICAR from PRFAR using the ammonia provided by the HisH subunit. This Xanthomonas axonopodis pv. citri (strain 306) protein is Imidazole glycerol phosphate synthase subunit HisF.